A 301-amino-acid chain; its full sequence is Ribonuclease H2 subunit A (301 aa).

Residue M1 is modified to N-acetylmethionine. An RNase H type-2 domain is found at 28-251 (PCVLGVDEAG…AQAILEKEAE (224 aa)). Residues D34, E35, and D142 each coordinate a divalent metal cation. T217 is subject to Phosphothreonine. A Phosphoserine modification is found at S258.

The protein belongs to the RNase HII family. Eukaryotic subfamily. In terms of assembly, the RNase H2 complex is a heterotrimer composed of the catalytic subunit RNASEH2A and the non-catalytic subunits RNASEH2B and RNASEH2C. Requires Mn(2+) as cofactor. Mg(2+) is required as a cofactor.

The protein resides in the nucleus. It catalyses the reaction Endonucleolytic cleavage to 5'-phosphomonoester.. Functionally, catalytic subunit of RNase HII, an endonuclease that specifically degrades the RNA of RNA:DNA hybrids. Participates in DNA replication, possibly by mediating the removal of lagging-strand Okazaki fragment RNA primers during DNA replication. Mediates the excision of single ribonucleotides from DNA:RNA duplexes. The chain is Ribonuclease H2 subunit A (Rnaseh2a) from Rattus norvegicus (Rat).